Here is a 495-residue protein sequence, read N- to C-terminus: MASLLSPATPTATSAAFHSCSTAGFSTPTHISSQNSSLSLLSRRGCMMRCSFSPQDIPVDSLSHLPPFLDFQNSLATFSDTQKWGFFVSAGIVWFYLTARPGVLIGAIDAYLLAPLQLGLDTLIGRRLKRSDFLVTEKLGEGSFGVVYAGVLLPKNSTLVDDVRVSKARAKAMDFTGEFKQRVILKKVKVGVRGAEEFGEYEEWFNYRLSRAAPDTCAEFLGSFVADKTNTMFTKGGKWLVWRFEGDRDLADYMKDRSFPSNLESIMFGRVLQGVESVKRRALIIKQIMRQIITSLRKIHGTGIVHRDVKPANLVVTKKGQIKLIDFGAAADLRIGKNYIPERTLLDPDYCPPELYVLPEETPSPPPEPIAALLSPILWQLNSPDLFDMYSAGIVLLQMAVPTLRSTAGLKNFNLEIKSVEYDLNRWRERTRTRPDLSILDLDSGRGWDLVTKLISERGSLRRGRLSAAAALRHPYFLLGGDQAAAVLSKLSFSK.

A chloroplast-targeting transit peptide spans 1 to 49 (MASLLSPATPTATSAAFHSCSTAGFSTPTHISSQNSSLSLLSRRGCMMR). Residues 133 to 477 (FLVTEKLGEG…AAAALRHPYF (345 aa)) form the Protein kinase domain. Residues 139-147 (LGEGSFGVV) and Lys186 contribute to the ATP site. Residue Asp308 is the Proton acceptor of the active site.

The protein belongs to the protein kinase superfamily. Ser/Thr protein kinase family.

It is found in the plastid. The protein resides in the chloroplast thylakoid. It catalyses the reaction L-seryl-[protein] + ATP = O-phospho-L-seryl-[protein] + ADP + H(+). The catalysed reaction is L-threonyl-[protein] + ATP = O-phospho-L-threonyl-[protein] + ADP + H(+). Light-dependent serine/threonine protein kinase that specifically phosphorylates N-terminal threonine residues in psbA/D1, psbD/D2, psbC/CP43 and psbH, which are components of the core antenna complex of photosystem II. Phosphorylation of PSII core components facilitates the exchange of chlorophyll proteins between the grana and the stroma lamellae. Also involved in the phosphorylation of the calcium-sensing receptor (CaS). This Arabidopsis thaliana (Mouse-ear cress) protein is Serine/threonine-protein kinase STN8, chloroplastic (STN8).